The primary structure comprises 175 residues: uncharacterized protein (175 aa).

The span at 1-17 (MKVEGGESMHESEEGRD) shows a compositional bias: basic and acidic residues. Residues 1-21 (MKVEGGESMHESEEGRDVPNG) form a disordered region.

This is an uncharacterized protein from Bacillus thuringiensis subsp. kurstaki.